The sequence spans 269 residues: 5'-nucleotidase SurE (269 aa).

Residues Asp11, Asp12, Ser43, and Asn101 each coordinate a divalent metal cation.

This sequence belongs to the SurE nucleotidase family. The cofactor is a divalent metal cation.

It localises to the cytoplasm. It carries out the reaction a ribonucleoside 5'-phosphate + H2O = a ribonucleoside + phosphate. In terms of biological role, nucleotidase that shows phosphatase activity on nucleoside 5'-monophosphates. This is 5'-nucleotidase SurE from Synechococcus sp. (strain CC9605).